Here is a 134-residue protein sequence, read N- to C-terminus: MSDIPSDLHYTAEHEWIRRSGDDTVRVGITDYAQSALGDVVFVQLPVIGTAVTAGETFGEVESTKSVSDLYAPISGKVSAVNSDLDGTPQLVNSDPYGAGWLLDIQVDSSDVAALESALTTLLDAEAYRGTLTE.

The 83-residue stretch at 24–106 (TVRVGITDYA…YGAGWLLDIQ (83 aa)) folds into the Lipoyl-binding domain. An N6-lipoyllysine modification is found at K65.

This sequence belongs to the GcvH family. As to quaternary structure, the glycine cleavage system is composed of four proteins: P, T, L and H. The cofactor is (R)-lipoate.

In terms of biological role, the glycine cleavage system catalyzes the degradation of glycine. The H protein shuttles the methylamine group of glycine from the P protein to the T protein. The chain is Glycine cleavage system H protein from Mycobacterium bovis (strain ATCC BAA-935 / AF2122/97).